A 361-amino-acid chain; its full sequence is tRNA 2-selenouridine synthase (361 aa).

Residues 11 to 134 (LLADTPLIDV…LRQTAIQATW (124 aa)) form the Rhodanese domain. Catalysis depends on C94, which acts as the S-selanylcysteine intermediate.

The protein belongs to the SelU family. Monomer.

The enzyme catalyses 5-methylaminomethyl-2-thiouridine(34) in tRNA + selenophosphate + (2E)-geranyl diphosphate + H2O + H(+) = 5-methylaminomethyl-2-selenouridine(34) in tRNA + (2E)-thiogeraniol + phosphate + diphosphate. The catalysed reaction is 5-methylaminomethyl-2-thiouridine(34) in tRNA + (2E)-geranyl diphosphate = 5-methylaminomethyl-S-(2E)-geranyl-thiouridine(34) in tRNA + diphosphate. It catalyses the reaction 5-methylaminomethyl-S-(2E)-geranyl-thiouridine(34) in tRNA + selenophosphate + H(+) = 5-methylaminomethyl-2-(Se-phospho)selenouridine(34) in tRNA + (2E)-thiogeraniol. It carries out the reaction 5-methylaminomethyl-2-(Se-phospho)selenouridine(34) in tRNA + H2O = 5-methylaminomethyl-2-selenouridine(34) in tRNA + phosphate. Involved in the post-transcriptional modification of the uridine at the wobble position (U34) of tRNA(Lys), tRNA(Glu) and tRNA(Gln). Catalyzes the conversion of 2-thiouridine (S2U-RNA) to 2-selenouridine (Se2U-RNA). Acts in a two-step process involving geranylation of 2-thiouridine (S2U) to S-geranyl-2-thiouridine (geS2U) and subsequent selenation of the latter derivative to 2-selenouridine (Se2U) in the tRNA chain. This chain is tRNA 2-selenouridine synthase, found in Salmonella schwarzengrund (strain CVM19633).